A 457-amino-acid polypeptide reads, in one-letter code: Tubulin beta chain (457 aa).

Glutamine 11, glutamate 69, serine 138, glycine 142, threonine 143, glycine 144, asparagine 204, and asparagine 226 together coordinate GTP. Residue glutamate 69 participates in Mg(2+) binding. Positions 431–457 (EGEEEEDAYAEGAVVNGDQSYEDQYAA) are disordered.

The protein belongs to the tubulin family. Dimer of alpha and beta chains. A typical microtubule is a hollow water-filled tube with an outer diameter of 25 nm and an inner diameter of 15 nM. Alpha-beta heterodimers associate head-to-tail to form protofilaments running lengthwise along the microtubule wall with the beta-tubulin subunit facing the microtubule plus end conferring a structural polarity. Microtubules usually have 13 protofilaments but different protofilament numbers can be found in some organisms and specialized cells. It depends on Mg(2+) as a cofactor.

It is found in the cytoplasm. It localises to the cytoskeleton. In terms of biological role, tubulin is the major constituent of microtubules, a cylinder consisting of laterally associated linear protofilaments composed of alpha- and beta-tubulin heterodimers. Microtubules grow by the addition of GTP-tubulin dimers to the microtubule end, where a stabilizing cap forms. Below the cap, tubulin dimers are in GDP-bound state, owing to GTPase activity of alpha-tubulin. This chain is Tubulin beta chain (TUBB1), found in Porphyra purpurea (Red seaweed).